The following is a 418-amino-acid chain: Glutamyl-tRNA reductase (418 aa).

Substrate-binding positions include 49-52 (TCNR), serine 109, 114-116 (EPQ), and glutamine 120. The active-site Nucleophile is the cysteine 50. 189–194 (GAGETI) contacts NADP(+).

The protein belongs to the glutamyl-tRNA reductase family. Homodimer.

The catalysed reaction is (S)-4-amino-5-oxopentanoate + tRNA(Glu) + NADP(+) = L-glutamyl-tRNA(Glu) + NADPH + H(+). The protein operates within porphyrin-containing compound metabolism; protoporphyrin-IX biosynthesis; 5-aminolevulinate from L-glutamyl-tRNA(Glu): step 1/2. Its function is as follows. Catalyzes the NADPH-dependent reduction of glutamyl-tRNA(Glu) to glutamate 1-semialdehyde (GSA). The chain is Glutamyl-tRNA reductase from Klebsiella pneumoniae (strain 342).